We begin with the raw amino-acid sequence, 224 residues long: Prolactin-3D1 (224 aa).

The signal sequence occupies residues 1-29 (MQLTLNLSGSAGMQLLLLVSSLLLWENVS). 2 disulfides stabilise this stretch: C81-C199 and C216-C224. Residues N109 and N158 are each glycosylated (N-linked (GlcNAc...) asparagine).

This sequence belongs to the somatotropin/prolactin family.

Its subcellular location is the secreted. The polypeptide is Prolactin-3D1 (Prl3d1) (Mus musculus (Mouse)).